The sequence spans 357 residues: D(4) dopamine receptor (357 aa).

Residues 1-32 (MGNRSAADADGLLAGRGPGTGGGAGSPGAAAA) lie on the Extracellular side of the membrane. An N-linked (GlcNAc...) asparagine glycan is attached at Asn3. A helical transmembrane segment spans residues 33–55 (LVGGVLLIGAVLAGNALVCVSVA). Topologically, residues 56–65 (AERALQTPTN) are cytoplasmic. The helical transmembrane segment at 66–88 (YFIVSLAAADLLLALLVLPLFVY) threads the bilayer. Asp75 contributes to the Na(+) binding site. Over 89–104 (SEVQGGVWQFSPGLCD) the chain is Extracellular. Residues Cys103 and Cys180 are joined by a disulfide bond. The helical transmembrane segment at 105–126 (ALMAMDVMLCTASIFNLCAISA) threads the bilayer. Ser117 is a Na(+) binding site. Topologically, residues 127 to 146 (DRFVAVAVPLSYNRQSGGGR) are cytoplasmic. The chain crosses the membrane as a helical span at residues 147–170 (QLLLIGATWLLSAAVAAPVLCGLN). The Extracellular segment spans residues 171-186 (DARGRDPAVCRLEDRD). Residues 187–208 (YVVYSSVCSFFLPCPVMLLLYW) form a helical membrane-spanning segment. Over 209-284 (ATFRGLRRWE…ITGRERKAMR (76 aa)) the chain is Cytoplasmic. A disordered region spans residues 225 to 261 (LHGRRPRRPSGPGPPPPEAVETPEAPEAIPTPDATLA). Residues 233–242 (PSGPGPPPPE) are compositionally biased toward pro residues. The span at 243 to 259 (AVETPEAPEAIPTPDAT) shows a compositional bias: low complexity. A helical membrane pass occupies residues 285–307 (VLPVVVGAFLVCWTPFFVVHITG). At 308–316 (ALCPACAVP) the chain is on the extracellular side. The cysteines at positions 310 and 313 are disulfide-linked. A helical transmembrane segment spans residues 317–339 (PRLVSAVTWLGYVNSALNPLIYT). Residues 340-357 (VFNAEFRAVFRKALRLCC) lie on the Cytoplasmic side of the membrane. Cys357 carries S-palmitoyl cysteine lipidation.

Belongs to the G-protein coupled receptor 1 family. In terms of assembly, forms homo- and heterooligomers with DRD2. D4.7 allele exhibits higher affinity for homodimers compared to DRD2 heterodimers, while alleles D42. and 4.4 have similar affinities for both. The interaction with DRD2 may modulate agonist-induced downstream signaling. Interacts with CLIC6. Interacts with GPRASP1. May interact with ADORA2A. Interacts with KLHL12. Post-translationally, polyubiquitinated by the BCR(KLHL12) E3 ubiquitin ligase complex: polyubiquitination does not lead to degradation of DRD4 protein. Palmitoylated. Palmitoylation of the C-terminal Cys is important for normal expression at the cell membrane.

It localises to the cell membrane. Functionally, dopamine receptor responsible for neuronal signaling in the mesolimbic system of the brain, an area of the brain that regulates emotion and complex behavior. Activated by dopamine, but also by epinephrine and norepinephrine, and by numerous synthetic agonists and drugs. Agonist binding triggers signaling via G proteins that inhibit adenylyl cyclase. Modulates the circadian rhythm of contrast sensitivity by regulating the rhythmic expression of NPAS2 in the retinal ganglion cells. The chain is D(4) dopamine receptor (DRD4) from Mustela putorius furo (European domestic ferret).